Consider the following 2385-residue polypeptide: Neuron navigator 3 (2385 aa).

The segment at 17 to 38 (SKPVHTALPIPNLGTTGSQHCS) is disordered. Residues 29–38 (LGTTGSQHCS) show a composition bias toward polar residues. In terms of domain architecture, Calponin-homology (CH) spans 77 to 184 (KEDSKIYTDW…LFFSLSRYKQ (108 aa)). The disordered stretch occupies residues 203 to 625 (VTHASPPSEA…LPQQQQHSHP (423 aa)). Composition is skewed to polar residues over residues 210-243 (SEAS…TSQK), 258-279 (GSSS…FNSI), and 297-316 (KGPQ…STAG). The span at 318–329 (PPASAIPSPSAS) shows a compositional bias: low complexity. A compositionally biased stretch (polar residues) spans 335–352 (KSMNVKHSATSTMLTVKQ). Low complexity-rich tracts occupy residues 353 to 363 (SSTATSPTPSS) and 427 to 439 (NSGL…TNSS). A compositionally biased stretch (basic and acidic residues) spans 465 to 491 (PKEKEEKNRDKNKVCTEKPVKEEKDQV). A compositionally biased stretch (low complexity) spans 521 to 535 (IPSSSGIPKPGSKVP). Composition is skewed to polar residues over residues 537-548 (VKQTISPGSTAS), 557-567 (TKGSPSQSLSK), and 591-625 (ASPS…HSHP). The stretch at 679-707 (ETRRMRTVKNIADLRQNLEETMSSLRGTQ) forms a coiled coil. Disordered regions lie at residues 877 to 1312 (ADSW…SPLF), 1351 to 1370 (SSSS…TSLH), 1410 to 1468 (LSES…SAMS), 1650 to 1778 (GALN…KRQN), 1850 to 1881 (DRLK…SRQS), and 2360 to 2385 (SSTQ…ESTL). The span at 882-895 (DSSSVSSGLSDTLD) shows a compositional bias: low complexity. A compositionally biased stretch (polar residues) spans 896-925 (NISTDDLNTTSSVSSYSNITVPSRKNTQLR). Residues 942-959 (EELKKPEEDFDSHGDAGG) are compositionally biased toward basic and acidic residues. Positions 979–988 (ASLSVSQTGS) are enriched in polar residues. Over residues 1014–1026 (GKTDDAKASEKGK) the composition is skewed to basic and acidic residues. Composition is skewed to low complexity over residues 1074 to 1092 (GSSA…GSAT) and 1157 to 1170 (SSTS…SSKS). Positions 1187 to 1196 (GRSSPVTVNQ) are enriched in polar residues. Composition is skewed to low complexity over residues 1206–1226 (VSDS…TSAS) and 1253–1263 (GAKAGGKSASA). A compositionally biased stretch (polar residues) spans 1264–1289 (PNTEGVKSSSVMPSPSTTLARQGSLE). Positions 1296–1305 (GSMGSAGGLS) are enriched in gly residues. Residues 1436-1445 (NQEEGKEWLR) are compositionally biased toward basic and acidic residues. A compositionally biased stretch (polar residues) spans 1446 to 1462 (SHSTGGLQDTGNQSPLV). Phosphoserine occurs at positions 1459 and 1463. A coiled-coil region spans residues 1562–1653 (AEEKAHSEQI…AQAAIQGALN (92 aa)). The segment covering 1672 to 1689 (SVSSINSATSHSSIGSGN) has biased composition (low complexity). Residues 1701–1714 (WVNSRGSELRSSFK) are compositionally biased toward polar residues. Residues 1794–1861 (EAEAEIILQL…LKAETGNTAK (68 aa)) adopt a coiled-coil conformation. Residues 1867–1881 (SESSSSTSSSSSRQS) show a composition bias toward low complexity.

It belongs to the Nav/unc-53 family. Highly expressed in brain. Expressed at low levels in heart and placenta. Present in activated T-cells but not in resting T-cells (at protein level). Down-regulated in primary neuroblastoma.

The protein localises to the nucleus outer membrane. Plays a role in cell migration. May be involved in neuron regeneration. May regulate IL2 production by T-cells. The polypeptide is Neuron navigator 3 (NAV3) (Homo sapiens (Human)).